A 763-amino-acid polypeptide reads, in one-letter code: Phosphoglycerol transferase I (763 aa).

Helical transmembrane passes span 1–21 (MSEL…AWKA), 26–46 (WWFA…ITLF), 77–97 (ILPG…LGWI), and 108–128 (FGYS…SPAF).

It belongs to the OpgB family.

It localises to the cell inner membrane. It catalyses the reaction a phosphatidylglycerol + a membrane-derived-oligosaccharide D-glucose = a 1,2-diacyl-sn-glycerol + a membrane-derived-oligosaccharide 6-(glycerophospho)-D-glucose.. It participates in glycan metabolism; osmoregulated periplasmic glucan (OPG) biosynthesis. Functionally, transfers a phosphoglycerol residue from phosphatidylglycerol to the membrane-bound nascent glucan backbones. This chain is Phosphoglycerol transferase I, found in Escherichia coli (strain SMS-3-5 / SECEC).